Consider the following 694-residue polypeptide: Two-component response regulator ORR25 (694 aa).

The Response regulatory domain maps to 17 to 132 (RVLAVDDSPV…DIQNIWQHVW (116 aa)). The residue at position 68 (Asp-68) is a 4-aspartylphosphate. Residues 183 to 242 (TLKRQRVVWTPELHRDFVIAVHELGVDRAVPRKILRMMKVDYMTRENIASHLQKYRLYLK) enclose the HTH myb-type domain. Residues 213-238 (PRKILRMMKVDYMTRENIASHLQKYR) constitute a DNA-binding region (H-T-H motif). The tract at residues 326-349 (VGHGGSPGNNPVFQPLQNSSNARK) is disordered. Residues 333–347 (GNNPVFQPLQNSSNA) show a composition bias toward polar residues.

Belongs to the ARR family. Type-B subfamily. Post-translationally, two-component system major event consists of a His-to-Asp phosphorelay between a sensor histidine kinase (HK) and a response regulator (RR). In plants, the His-to-Asp phosphorelay involves an additional intermediate named Histidine-containing phosphotransfer protein (HPt). This multistep phosphorelay consists of a His-Asp-His-Asp sequential transfer of a phosphate group between first a His and an Asp of the HK protein, followed by the transfer to a conserved His of the HPt protein and finally the transfer to an Asp in the receiver domain of the RR protein.

The protein resides in the nucleus. Functionally, transcriptional activator that binds specific DNA sequence. Functions as a response regulator involved in His-to-Asp phosphorelay signal transduction system. Phosphorylation of the Asp residue in the receiver domain activates the ability of the protein to promote the transcription of target genes. May directly activate some type-A response regulators in response to cytokinins. The protein is Two-component response regulator ORR25 of Oryza sativa subsp. japonica (Rice).